The chain runs to 90 residues: DNA-directed RNA polymerase subunit omega (90 aa).

Belongs to the RNA polymerase subunit omega family. As to quaternary structure, the RNAP catalytic core consists of 2 alpha, 1 beta, 1 beta' and 1 omega subunit. When a sigma factor is associated with the core the holoenzyme is formed, which can initiate transcription.

The catalysed reaction is RNA(n) + a ribonucleoside 5'-triphosphate = RNA(n+1) + diphosphate. Functionally, promotes RNA polymerase assembly. Latches the N- and C-terminal regions of the beta' subunit thereby facilitating its interaction with the beta and alpha subunits. The sequence is that of DNA-directed RNA polymerase subunit omega from Histophilus somni (strain 129Pt) (Haemophilus somnus).